We begin with the raw amino-acid sequence, 118 residues long: Small ribosomal subunit protein uS13 (118 aa).

The segment at 94–118 (SLPVRGQRTKTNARTRKGPRKPIKK) is disordered.

This sequence belongs to the universal ribosomal protein uS13 family. As to quaternary structure, part of the 30S ribosomal subunit. Forms a loose heterodimer with protein S19. Forms two bridges to the 50S subunit in the 70S ribosome.

Functionally, located at the top of the head of the 30S subunit, it contacts several helices of the 16S rRNA. In the 70S ribosome it contacts the 23S rRNA (bridge B1a) and protein L5 of the 50S subunit (bridge B1b), connecting the 2 subunits; these bridges are implicated in subunit movement. Contacts the tRNAs in the A and P-sites. The sequence is that of Small ribosomal subunit protein uS13 from Haemophilus influenzae (strain 86-028NP).